We begin with the raw amino-acid sequence, 338 residues long: Ketol-acid reductoisomerase (NADP(+)) (338 aa).

One can recognise a KARI N-terminal Rossmann domain in the interval 1 to 181 (MNVFYDKDAD…GGGRAGIIET (181 aa)). NADP(+) is bound by residues 24–27 (YGSQ), Arg47, and Ser52. His107 is a catalytic residue. Gly133 lines the NADP(+) pocket. In terms of domain architecture, KARI C-terminal knotted spans 182–327 (NFREETETDL…AKLRAMMPWI (146 aa)). Mg(2+) contacts are provided by Asp190, Glu194, Glu226, and Glu230. Ser251 is a binding site for substrate.

Belongs to the ketol-acid reductoisomerase family. It depends on Mg(2+) as a cofactor.

It catalyses the reaction (2R)-2,3-dihydroxy-3-methylbutanoate + NADP(+) = (2S)-2-acetolactate + NADPH + H(+). It carries out the reaction (2R,3R)-2,3-dihydroxy-3-methylpentanoate + NADP(+) = (S)-2-ethyl-2-hydroxy-3-oxobutanoate + NADPH + H(+). It participates in amino-acid biosynthesis; L-isoleucine biosynthesis; L-isoleucine from 2-oxobutanoate: step 2/4. The protein operates within amino-acid biosynthesis; L-valine biosynthesis; L-valine from pyruvate: step 2/4. Its function is as follows. Involved in the biosynthesis of branched-chain amino acids (BCAA). Catalyzes an alkyl-migration followed by a ketol-acid reduction of (S)-2-acetolactate (S2AL) to yield (R)-2,3-dihydroxy-isovalerate. In the isomerase reaction, S2AL is rearranged via a Mg-dependent methyl migration to produce 3-hydroxy-3-methyl-2-ketobutyrate (HMKB). In the reductase reaction, this 2-ketoacid undergoes a metal-dependent reduction by NADPH to yield (R)-2,3-dihydroxy-isovalerate. The sequence is that of Ketol-acid reductoisomerase (NADP(+)) from Burkholderia multivorans (strain ATCC 17616 / 249).